Consider the following 258-residue polypeptide: Mediator of RNA polymerase II transcription subunit 4 (258 aa).

A coiled-coil region spans residues 52–101 (FRKMLELAEEQAKVEEAMDQLRAKVEVHDREIQKLQKSLKDAELILSTAI). Disordered regions lie at residues 164 to 208 (GKSE…EVPN) and 234 to 258 (LETRAQDDVEVMSTDSSSSSSSDSQ). Over residues 166-190 (SEQNINGGTVTHQNSGMPSEQQRTL) the composition is skewed to polar residues. The segment covering 194-204 (AGSGSGSGAGG) has biased composition (gly residues). Low complexity predominate over residues 246–258 (STDSSSSSSSDSQ).

This sequence belongs to the Mediator complex subunit 4 family. In terms of assembly, component of the Mediator complex, which includes at least MED4, MED6, MED14, MED17, MED18, MED20, MED21, MED23, MED24, MED27, MED30 and MED31. Interacts with MED10 and MED21.

Its subcellular location is the nucleus. Component of the Mediator complex, a coactivator involved in the regulated transcription of nearly all RNA polymerase II-dependent genes. Mediator functions as a bridge to convey information from gene-specific regulatory proteins to the basal RNA polymerase II transcription machinery. Mediator is recruited to promoters by direct interactions with regulatory proteins and serves as a scaffold for the assembly of a functional preinitiation complex with RNA polymerase II and the general transcription factors. Required for activated transcription of the MtnA, MtnB and MtnD genes. The chain is Mediator of RNA polymerase II transcription subunit 4 (MED4) from Drosophila melanogaster (Fruit fly).